The sequence spans 394 residues: HORMA domain-containing protein 1 (394 aa).

In terms of domain architecture, HORMA spans 24–226 (QQSLVLVKRL…TPFHTFKVKV (203 aa)). The disordered stretch occupies residues 306 to 394 (KESPELSISH…RKFSEPKEHI (89 aa)). Polar residues predominate over residues 311 to 325 (LSISHSQVEQLVSKT). The segment covering 353-362 (KSKESRKRSQ) has biased composition (basic and acidic residues). Ser-376 is modified (phosphoserine). Positions 383 to 386 (KRRK) match the Nuclear localization signal motif.

In terms of assembly, interacts with HORMAD2. Interacts with IHO1. Phosphorylated at Ser-377 in a SPO11-dependent manner.

The protein resides in the nucleus. The protein localises to the chromosome. In terms of biological role, plays a key role in meiotic progression. Regulates 3 different functions during meiosis: ensures that sufficient numbers of processed DNA double-strand breaks (DSBs) are available for successful homology search by increasing the steady-state numbers of single-stranded DSB ends. Promotes synaptonemal-complex formation independently of its role in homology search. Plays a key role in the male mid-pachytene checkpoint and the female meiotic prophase checkpoint: required for efficient build-up of ATR activity on unsynapsed chromosome regions, a process believed to form the basis of meiotic silencing of unsynapsed chromatin (MSUC) and meiotic prophase quality control in both sexes. In Sus scrofa (Pig), this protein is HORMA domain-containing protein 1 (HORMAD1).